The sequence spans 188 residues: Peroxidase B (188 aa).

The protein belongs to the peroxidase family. Post-translationally, partially N-glycosylated.

It is found in the secreted. The enzyme catalyses 2 a phenolic donor + H2O2 = 2 a phenolic radical donor + 2 H2O. The chain is Peroxidase B from Aloe vera (Aloe).